The primary structure comprises 149 residues: Nucleoside diphosphate kinase (149 aa).

ATP is bound by residues K9, F57, R85, T91, R102, and N112. The active-site Pros-phosphohistidine intermediate is the H115.

Belongs to the NDK family. Homotetramer. Mg(2+) is required as a cofactor.

It is found in the cytoplasm. It carries out the reaction a 2'-deoxyribonucleoside 5'-diphosphate + ATP = a 2'-deoxyribonucleoside 5'-triphosphate + ADP. The enzyme catalyses a ribonucleoside 5'-diphosphate + ATP = a ribonucleoside 5'-triphosphate + ADP. Its function is as follows. Major role in the synthesis of nucleoside triphosphates other than ATP. The ATP gamma phosphate is transferred to the NDP beta phosphate via a ping-pong mechanism, using a phosphorylated active-site intermediate. This is Nucleoside diphosphate kinase from Roseiflexus castenholzii (strain DSM 13941 / HLO8).